Here is a 342-residue protein sequence, read N- to C-terminus: Farnesyl pyrophosphate synthase (342 aa).

Positions 47, 50, and 86 each coordinate isopentenyl diphosphate. Mg(2+)-binding residues include D93 and D97. R102 contributes to the dimethylallyl diphosphate binding site. R103 is an isopentenyl diphosphate binding site. K190, T191, Q229, K246, and K255 together coordinate dimethylallyl diphosphate.

Belongs to the FPP/GGPP synthase family. In terms of assembly, homodimer. It depends on Mg(2+) as a cofactor. As to expression, mostly expressed in roots and seeds, and to a lower extent, in leaves and stems.

It localises to the cytoplasm. The enzyme catalyses isopentenyl diphosphate + dimethylallyl diphosphate = (2E)-geranyl diphosphate + diphosphate. It carries out the reaction isopentenyl diphosphate + (2E)-geranyl diphosphate = (2E,6E)-farnesyl diphosphate + diphosphate. It functions in the pathway isoprenoid biosynthesis; farnesyl diphosphate biosynthesis; farnesyl diphosphate from geranyl diphosphate and isopentenyl diphosphate: step 1/1. The protein operates within isoprenoid biosynthesis; geranyl diphosphate biosynthesis; geranyl diphosphate from dimethylallyl diphosphate and isopentenyl diphosphate: step 1/1. Stimulated by methyl jasmonate (MeJA). Catalyzes the sequential condensation of isopentenyl pyrophosphate with the allylic pyrophosphates, dimethylallyl pyrophosphate, and then with the resultant geranylpyrophosphate to the ultimate product farnesyl pyrophosphate. Component of the triterpene saponins (e.g. ginsenosides or panaxosides) and phytosterols biosynthetic pathways. Promotes the accumulation of ginsenosides. This chain is Farnesyl pyrophosphate synthase, found in Panax ginseng (Korean ginseng).